Reading from the N-terminus, the 311-residue chain is MKVWWAVLAAAILAGCRAQTEQEVEVPEQARWKAGQPWELALGRFWDYLRWVQSLSDQVQEELLSSQVTQELTMLMEETMKEVKAYKSELEEQLSPMAQEHRARLSKELQVAGALEADMEDVCNRLAQYRGEAQAMLGQSTEELARAFSSHLRKLRKRLLRDAEDLQKRMAVYGAGAREGAERGVSAVRERLGSRLERGRLRVATVGTLAGRPLRERAQAWGERLRGHLEEVGSRARDRLNEVREQVEEVRVKVEEQAPQMRLQAEAFQARLKSWFEPLVEDMQRQWAGLVEKLQAAMPSKAPAAAPIENQ.

A signal peptide spans 1–18 (MKVWWAVLAAAILAGCRA). 8 consecutive repeat copies span residues 74–95 (MLME…EQLS), 96–116 (PMAQ…GALE), 117–138 (ADME…AMLG), 139–160 (QSTE…KRLL), 161–182 (RDAE…EGAE), 183–204 (RGVS…LRVA), 205–226 (TVGT…ERLR), and 227–248 (GHLE…EQVE). Residues 74-248 (MLMEETMKEV…RLNEVREQVE (175 aa)) form an 8 X 22 AA approximate tandem repeats region. M136 carries the post-translational modification Methionine sulfoxide. S140 is modified (phosphoserine). Residues 151-161 (HLRKLRKRLLR) are LDL and other lipoprotein receptors binding. 155-158 (LRKR) provides a ligand contact to heparin. A lipid-binding and lipoprotein association region spans residues 203–283 (VATVGTLAGR…SWFEPLVEDM (81 aa)). An O-linked (GalNAc...) threonine glycan is attached at T205. 222 to 229 (GERLRGHL) is a binding site for heparin. The homooligomerization stretch occupies residues 259-311 (PQMRLQAEAFQARLKSWFEPLVEDMQRQWAGLVEKLQAAMPSKAPAAAPIENQ). The segment at 271 to 283 (RLKSWFEPLVEDM) is specificity for association with VLDL.

This sequence belongs to the apolipoprotein A1/A4/E family. As to quaternary structure, homotetramer. May interact with ABCA1; functionally associated with ABCA1 in the biogenesis of HDLs. May interact with APP/A4 amyloid-beta peptide; the interaction is extremely stable in vitro but its physiological significance is unclear. May interact with MAPT. May interact with MAP2. In the cerebrospinal fluid, interacts with secreted SORL1. Interacts with PMEL; this allows the loading of PMEL luminal fragment on ILVs to induce fibril nucleation. In terms of processing, APOE exists as multiple glycosylated and sialylated glycoforms within cells and in plasma. The extent of glycosylation and sialylation are tissue and context specific. Glycated in plasma VLDL. Post-translationally, phosphorylated by FAM20C in the extracellular medium.

The protein localises to the secreted. It localises to the extracellular space. It is found in the extracellular matrix. Its subcellular location is the extracellular vesicle. The protein resides in the endosome. The protein localises to the multivesicular body. In terms of biological role, APOE is an apolipoprotein, a protein associating with lipid particles, that mainly functions in lipoprotein-mediated lipid transport between organs via the plasma and interstitial fluids. APOE is a core component of plasma lipoproteins and is involved in their production, conversion and clearance. Apolipoproteins are amphipathic molecules that interact both with lipids of the lipoprotein particle core and the aqueous environment of the plasma. As such, APOE associates with chylomicrons, chylomicron remnants, very low density lipoproteins (VLDL) and intermediate density lipoproteins (IDL) but shows a preferential binding to high-density lipoproteins (HDL). It also binds a wide range of cellular receptors including the LDL receptor/LDLR and the very low-density lipoprotein receptor/VLDLR that mediate the cellular uptake of the APOE-containing lipoprotein particles. Finally, APOE also has a heparin-binding activity and binds heparan-sulfate proteoglycans on the surface of cells, a property that supports the capture and the receptor-mediated uptake of APOE-containing lipoproteins by cells. This is Apolipoprotein E (APOE) from Oryctolagus cuniculus (Rabbit).